Consider the following 449-residue polypeptide: Protein CapK (449 aa).

The protein operates within capsule biogenesis; capsule polysaccharide biosynthesis. Required for the biosynthesis of type 1 capsular polysaccharide. The polypeptide is Protein CapK (capK) (Staphylococcus aureus).